Consider the following 300-residue polypeptide: Lipoyl synthase 2 (300 aa).

Residues Cys46, Cys51, Cys57, Cys72, Cys76, Cys79, and Ser294 each contribute to the [4Fe-4S] cluster site. The Radical SAM core domain occupies 58–283; that stretch reads YAQKTATFLL…GKLAREMGFS (226 aa).

Belongs to the radical SAM superfamily. Lipoyl synthase family. The cofactor is [4Fe-4S] cluster.

The protein resides in the cytoplasm. It catalyses the reaction [[Fe-S] cluster scaffold protein carrying a second [4Fe-4S](2+) cluster] + N(6)-octanoyl-L-lysyl-[protein] + 2 oxidized [2Fe-2S]-[ferredoxin] + 2 S-adenosyl-L-methionine + 4 H(+) = [[Fe-S] cluster scaffold protein] + N(6)-[(R)-dihydrolipoyl]-L-lysyl-[protein] + 4 Fe(3+) + 2 hydrogen sulfide + 2 5'-deoxyadenosine + 2 L-methionine + 2 reduced [2Fe-2S]-[ferredoxin]. Its pathway is protein modification; protein lipoylation via endogenous pathway; protein N(6)-(lipoyl)lysine from octanoyl-[acyl-carrier-protein]: step 2/2. Catalyzes the radical-mediated insertion of two sulfur atoms into the C-6 and C-8 positions of the octanoyl moiety bound to the lipoyl domains of lipoate-dependent enzymes, thereby converting the octanoylated domains into lipoylated derivatives. In Nostoc sp. (strain PCC 7120 / SAG 25.82 / UTEX 2576), this protein is Lipoyl synthase 2.